Reading from the N-terminus, the 305-residue chain is Tyrosine recombinase XerD (305 aa).

Residues 9-94 (MQDFGYVEQF…AIRRLFQYLH (86 aa)) form the Core-binding (CB) domain. A Tyr recombinase domain is found at 115-299 (RLPKDISEEQ…ATERLKQIHS (185 aa)). Residues R155, K179, H251, R254, and H277 contribute to the active site. The active-site O-(3'-phospho-DNA)-tyrosine intermediate is the Y286.

This sequence belongs to the 'phage' integrase family. XerD subfamily. As to quaternary structure, forms a cyclic heterotetrameric complex composed of two molecules of XerC and two molecules of XerD.

The protein localises to the cytoplasm. Site-specific tyrosine recombinase, which acts by catalyzing the cutting and rejoining of the recombining DNA molecules. The XerC-XerD complex is essential to convert dimers of the bacterial chromosome into monomers to permit their segregation at cell division. It also contributes to the segregational stability of plasmids. This Vibrio vulnificus (strain CMCP6) protein is Tyrosine recombinase XerD.